A 286-amino-acid polypeptide reads, in one-letter code: ATP synthase gamma chain (286 aa).

It belongs to the ATPase gamma chain family. In terms of assembly, F-type ATPases have 2 components, CF(1) - the catalytic core - and CF(0) - the membrane proton channel. CF(1) has five subunits: alpha(3), beta(3), gamma(1), delta(1), epsilon(1). CF(0) has three main subunits: a, b and c.

It is found in the cell inner membrane. Functionally, produces ATP from ADP in the presence of a proton gradient across the membrane. The gamma chain is believed to be important in regulating ATPase activity and the flow of protons through the CF(0) complex. In Shewanella denitrificans (strain OS217 / ATCC BAA-1090 / DSM 15013), this protein is ATP synthase gamma chain.